The sequence spans 82 residues: Diphthamide biosynthesis protein 3 (82 aa).

One can recognise a DPH-type MB domain in the interval 8–64; that stretch reads IYDEVEIEDMTYDPALQTYSYPCPCGDKFEIALADLQDGQDIAVCPSCSLMVRVIFE. Fe cation is bound by residues Cys-30, Cys-32, Cys-52, and Cys-55.

This sequence belongs to the DPH3 family. In terms of assembly, component of the 2-(3-amino-3-carboxypropyl)histidine synthase complex composed of dph-1, dph-2, dph-3 and a NADH-dependent reductase, predominantly cbr-1. Fe(2+) is required as a cofactor.

The protein localises to the cytoplasm. It is found in the nucleus. The catalysed reaction is [3Fe-4S](1+)-[protein] + Fe(2+)-[Dph3] = [3Fe-4S](0)-[protein] + Fe(3+)-[Dph3]. It catalyses the reaction 2 [3Fe-4S](0)-[protein] + 2 Fe(2+)-[Dph3] + NADH = 2 [4Fe-4S](1+)-[protein] + 2 [Dph3] + NAD(+) + H(+). Its pathway is protein modification; peptidyl-diphthamide biosynthesis. Required for the first step of diphthamide biosynthesis, a post-translational modification of histidine which occurs in elongation factor 2. Dph-1 and dph-2 transfer a 3-amino-3-carboxypropyl (ACP) group from S-adenosyl-L-methionine (SAM) to a histidine residue, the reaction is assisted by a reduction system comprising dph-3 and a NADH-dependent reductase, predominantly cbr-1. Acts as an electron donor to reduce the Fe-S cluster in dph1-dph2 keeping the [4Fe-4S] clusters in the active and reduced state. Restores iron to dph-1-dph-2 iron-sulfur clusters which have degraded from [4Fe-4S] to [3Fe-4S] by donating an iron atom to reform [4Fe-4S] clusters, in a manner dependent on the presence of elongation factor 2 and SAM. Associates with the elongator complex and is required for tRNA Wobble base modifications mediated by the elongator complex. The elongator complex is required for multiple tRNA modifications, including mcm5U (5-methoxycarbonylmethyl uridine), mcm5s 2U (5-methoxycarbonylmethyl-2-thiouridine), and ncm5U (5-carbamoylmethyl uridine). The protein is Diphthamide biosynthesis protein 3 (dph-3) of Neurospora crassa (strain ATCC 24698 / 74-OR23-1A / CBS 708.71 / DSM 1257 / FGSC 987).